The chain runs to 1246 residues: MSEHNQDLRFLISDDVLNEDPMSTGRFAEEDRGSSDTEQLTDNKNDGEEPKETAVQAAFDGSDDVNRLEEPHNPVSSTANIGNFALLESSSAEVSDASCPATMPILVRQSPKTCSQPRTRKVKLSTLSLSSDPDPDINDPEFKARLEDSNQDDQDEELDLEMEEADSAGRESGEGNRDSEDEGLLADADLPIEVLLRRYGYPVPEGEGAVNGEPEQSESKGREQAAPTSTVSETLPSTKLSLAQPANQTDQSLTDTALPEPRVPEQLIISGKRQRRKKEIWTPDDSEPQHLVGKKRIKKVEIVEKVEADVHQNGDGLVIVEEETMGDEDNDDSKVGQEEEDGHEYDSEEEYDEDEDEEEEGAKEDNVDWDDRQDKEGDIGPRVRQPFLLRGTLRPYQQAGLEWLASLWSNNMNGILADEMGLGKTIQTIALLGHLACDKGVWGQHLIIVPTSVILNWEMEFKKFLPGMKVLTYYGNQKERKEKRVGWHTENTWQVCITSYQIVLADQHIFRRKNWCYMILDEAHNIKNFRSQRWQTLLGFKAQRRLLLTGTPLQNNLMELWSLLYFLMPGGIGADATAVVGFANHKEFMEWFSNPMDKAIETGDAMDEETLETVAKLHTLLRPFILRRLKSEVETQLPGKFEHVVYCRLSKRQRFLYDEFMSRASTHEALTTGGYLGVMNTLMQLRKVCNHPDLFEMRPVKTSFAMDNVARDFEPSDILIRKRLLAEEDERRIDALAIGFGVAHNEAMSGWVARARQTYDASDKLPYAASPLRRGKLSAPPPKDTRSVELWLKYRVWAEEEFSKRRWESIRATNRQRCGISPIYGSTFLSLLGNLPNFLLPQDVQSRREETFADFTPPAAKFITSLPERAKSLEDVIDRFAVIPPNAVARNLATYALPGLEPISHPALTDPAFDTLHRSSVKLQIAFPDASLLQYDCGKLQKLFEMLRDLKSEGHRVLIFTQMTRVLDILEMFLSHNGHRYLRLDGSTKIEDRQVLTERFNSDSRIFVFIASSRSGGVGINLTGADTVFFYDSDWNPSMDRQCMDRAHRIGQTREVHIYRFVSSHTVEENMLRKAEQKRLLDKMVIQEGGFNNDWWGRVGWKDMFGDVPGITDVSGVVEKSGEGIIDIQVEGTPVAEDVEVTRPRAGEERELARALAEVEDEEDAQAARMAQGEGELDLQEFEEGPKAVAKRVRVFEPENSGTPVTTEAGETGDVVEEYDDEPGSVEEYMLKWVEEDWDYFSPYRA.

Disordered regions lie at residues Met1 to Thr53, Asp60 to Ala79, Gln109 to Ala188, Pro202 to Val292, and Gly314 to Pro381. A compositionally biased stretch (basic and acidic residues) spans Phe27–Glu52. The span at Ser149–Asp166 shows a compositional bias: acidic residues. The segment covering Ser167 to Asp178 has biased composition (basic and acidic residues). The span at Ala226–Asp255 shows a compositional bias: polar residues. 2 stretches are compositionally biased toward acidic residues: residues Val320–Asp331 and Glu338–Ala362. Basic and acidic residues predominate over residues Lys363 to Pro381. The Helicase ATP-binding domain occupies Ala405–Gly570. Asp418 to Thr425 contacts ATP. A DEAH box motif is present at residues Asp521 to His524. The 154-residue stretch at Lys939–Asn1092 folds into the Helicase C-terminal domain.

The protein belongs to the SNF2/RAD54 helicase family. SWR1 subfamily. Component of the SWR1 chromatin-remodeling complex.

Its subcellular location is the nucleus. It carries out the reaction ATP + H2O = ADP + phosphate + H(+). Functionally, catalytic component of the SWR1 complex which mediates the ATP-dependent exchange of histone H2A for the H2A variant HZT1 leading to transcriptional regulation of selected genes by chromatin remodeling. The polypeptide is Helicase SWR1 (SWR1) (Cryptococcus neoformans var. neoformans serotype D (strain B-3501A) (Filobasidiella neoformans)).